A 781-amino-acid polypeptide reads, in one-letter code: LPS-assembly protein LptD (781 aa).

An N-terminal signal peptide occupies residues Met-1–Ala-24.

This sequence belongs to the LptD family. Component of the lipopolysaccharide transport and assembly complex. Interacts with LptE and LptA.

It is found in the cell outer membrane. Together with LptE, is involved in the assembly of lipopolysaccharide (LPS) at the surface of the outer membrane. This chain is LPS-assembly protein LptD, found in Histophilus somni (strain 129Pt) (Haemophilus somnus).